The primary structure comprises 148 residues: Large ribosomal subunit protein uL15 (148 aa).

A compositionally biased stretch (basic residues) spans 1–30 (MPSKLRKTRKLRGHVSHGHGRIGKHRKHPG). A disordered region spans residues 1–38 (MPSKLRKTRKLRGHVSHGHGRIGKHRKHPGGRGNAGGM).

The protein belongs to the universal ribosomal protein uL15 family. As to quaternary structure, component of the large ribosomal subunit.

The protein resides in the cytoplasm. In terms of biological role, component of the large ribosomal subunit. The ribosome is a large ribonucleoprotein complex responsible for the synthesis of proteins in the cell. The sequence is that of Large ribosomal subunit protein uL15 (rpl27a) from Xenopus laevis (African clawed frog).